The primary structure comprises 297 residues: MRPELSQYKHLSAGKVREIYEIDDKHILMVASDRISAYDFILDTEIPDKGRVLTAMSQFFFDTIDFPNHLAGPADDPRIPEEVLGRAMVCKKLNMLPFECVVRGYLTGSGLVEYKQTSSVCGVELPEGLVESSQLPEPIFTPATKADIGDHDINVSFDVVEERLGEARANQLRDASIAIYKAAAEIARDRGVILADTKFEFGIDEDGTLVLGDEVLTPDSSRYWPLEGYEAGSVQPSFDKQFVRNWLTGPKSGWDKDSGLEPPALPGSVVEATRERYIEAYELISGQKFCQWIGSCV.

It belongs to the SAICAR synthetase family.

The enzyme catalyses 5-amino-1-(5-phospho-D-ribosyl)imidazole-4-carboxylate + L-aspartate + ATP = (2S)-2-[5-amino-1-(5-phospho-beta-D-ribosyl)imidazole-4-carboxamido]succinate + ADP + phosphate + 2 H(+). It functions in the pathway purine metabolism; IMP biosynthesis via de novo pathway; 5-amino-1-(5-phospho-D-ribosyl)imidazole-4-carboxamide from 5-amino-1-(5-phospho-D-ribosyl)imidazole-4-carboxylate: step 1/2. This chain is Phosphoribosylaminoimidazole-succinocarboxamide synthase, found in Corynebacterium glutamicum (strain ATCC 13032 / DSM 20300 / JCM 1318 / BCRC 11384 / CCUG 27702 / LMG 3730 / NBRC 12168 / NCIMB 10025 / NRRL B-2784 / 534).